We begin with the raw amino-acid sequence, 355 residues long: Probable nitronate monooxygenase (355 aa).

Residues Asn-71, Gln-175, Gly-180, Gly-218, and 237–240 (QMGT) each bind FMN.

Belongs to the nitronate monooxygenase family. NMO class I subfamily. FMN is required as a cofactor.

It catalyses the reaction 3 propionate 3-nitronate + 3 O2 + H2O = 3 3-oxopropanoate + 2 nitrate + nitrite + H2O2 + 3 H(+). Its function is as follows. Nitronate monooxygenase that uses molecular oxygen to catalyze the oxidative denitrification of alkyl nitronates. Acts on propionate 3-nitronate (P3N), the presumed physiological substrate. Probably functions in the detoxification of P3N, a metabolic poison produced by plants and fungi as a defense mechanism. The chain is Probable nitronate monooxygenase from Staphylococcus aureus (strain MSSA476).